The sequence spans 263 residues: Endonuclease 8 (263 aa).

Pro2 (schiff-base intermediate with DNA) is an active-site residue. The active-site Proton donor is Glu3. Lys53 (proton donor; for beta-elimination activity) is an active-site residue. DNA is bound by residues Gln70, Arg125, and Asn169. Residues Lys229 to Lys263 form an FPG-type zinc finger. Residue Arg253 is the Proton donor; for delta-elimination activity of the active site.

Belongs to the FPG family. It depends on Zn(2+) as a cofactor.

The catalysed reaction is 2'-deoxyribonucleotide-(2'-deoxyribose 5'-phosphate)-2'-deoxyribonucleotide-DNA = a 3'-end 2'-deoxyribonucleotide-(2,3-dehydro-2,3-deoxyribose 5'-phosphate)-DNA + a 5'-end 5'-phospho-2'-deoxyribonucleoside-DNA + H(+). In terms of biological role, involved in base excision repair of DNA damaged by oxidation or by mutagenic agents. Acts as a DNA glycosylase that recognizes and removes damaged bases. Has a preference for oxidized pyrimidines, such as thymine glycol, 5,6-dihydrouracil and 5,6-dihydrothymine. Has AP (apurinic/apyrimidinic) lyase activity and introduces nicks in the DNA strand. Cleaves the DNA backbone by beta-delta elimination to generate a single-strand break at the site of the removed base with both 3'- and 5'-phosphates. In Salmonella paratyphi A (strain AKU_12601), this protein is Endonuclease 8.